A 196-amino-acid chain; its full sequence is MSAANMPTTTGAQGSGNQVPTTSTTIVNHFRELIKEPKNLDEAANYLFQTLLDDAVVGIFNETHHLRKSGNLAALDGVPEDSTYRMCEMPNLDIFGISTAKKPMDCTCPNCDRLVAAARFAPHLEKCMGMGRISSRIASRRLATKEGATSAHLHSSGNTGGTDDEDDVDWSSDKRRKKSNQNSRNNGSKKNNGKTF.

Residues 1–22 form a disordered region; the sequence is MSAANMPTTTGAQGSGNQVPTT. Residues 106–127 form an SGF11-type zinc finger; that stretch reads CTCPNCDRLVAAARFAPHLEKC. The segment at 141–196 is disordered; sequence RLATKEGATSAHLHSSGNTGGTDDEDDVDWSSDKRRKKSNQNSRNNGSKKNNGKTF. At Ser172 the chain carries Phosphoserine. Residues 180–196 are compositionally biased toward low complexity; it reads NQNSRNNGSKKNNGKTF.

The protein belongs to the SGF11 family. In terms of assembly, component of some SAGA transcription coactivator-HAT complexes, at least composed of Ada2b, not/nonstop, Pcaf/Gcn5, Sgf11 and Spt3. Within the SAGA complex, Sgf11, e(y)2, and not/nonstop form an additional subcomplex of SAGA called the DUB module (deubiquitination module). Interacts directly with not/nonstop. Interacts with the AMEX complex component xmas-2. Interacts with Cbp80; important for promoter recruitment of Sgf11 that is not associated with the DUB module.

The protein resides in the nucleus. The protein localises to the nucleoplasm. It is found in the cytoplasm. Its function is as follows. Component of the transcription regulatory histone acetylation (HAT) complex SAGA, a multiprotein complex that activates transcription by remodeling chromatin and mediating histone acetylation and deubiquitination. Within the SAGA complex, participates in a subcomplex that specifically deubiquitinates histone H2B. The SAGA complex is recruited to specific gene promoters by activators, where it is required for transcription. Required for nuclear receptor-mediated transactivation. Binds independently on SAGA to promoters in an RNA-dependent manner. Binds to mRNA and is essential for total mRNA export from the nucleus. Required to counteract heterochromatin silencing. Controls the development of neuronal connectivity in visual system by being required for accurate axon targeting in the optic lobe. Required for expression of ecdysone-induced genes such as br/broad. The chain is SAGA-associated factor 11 homolog from Drosophila simulans (Fruit fly).